Consider the following 242-residue polypeptide: HTH domain-truncated transcriptional regulator QseD (242 aa).

Belongs to the LysR transcriptional regulatory family.

In terms of biological role, represses EHEC virulence expression. Down-regulates expression of LEE (locus of enterocyte effacement) and iraD genes, and alters AE (attaching and effacing) lesion formation. May regulate transcription through interactions with another HTH DNA-binding protein. The polypeptide is HTH domain-truncated transcriptional regulator QseD (qseD) (Escherichia coli O157:H7).